The chain runs to 263 residues: Hydroxyethylthiazole kinase (263 aa).

Met39 provides a ligand contact to substrate. Residues Lys115 and Thr160 each contribute to the ATP site. Gly187 is a binding site for substrate.

This sequence belongs to the Thz kinase family. The cofactor is Mg(2+).

It catalyses the reaction 5-(2-hydroxyethyl)-4-methylthiazole + ATP = 4-methyl-5-(2-phosphooxyethyl)-thiazole + ADP + H(+). It functions in the pathway cofactor biosynthesis; thiamine diphosphate biosynthesis; 4-methyl-5-(2-phosphoethyl)-thiazole from 5-(2-hydroxyethyl)-4-methylthiazole: step 1/1. Its function is as follows. Catalyzes the phosphorylation of the hydroxyl group of 4-methyl-5-beta-hydroxyethylthiazole (THZ). The chain is Hydroxyethylthiazole kinase from Staphylococcus haemolyticus (strain JCSC1435).